Consider the following 325-residue polypeptide: Golgi to ER traffic protein 4 homolog B (325 aa).

Disordered stretches follow at residues 1–22 and 306–325; these read MAAAMAEQEGSKGSARNRGGVQ and SGEDDDVEDGQEDSSPIELD. A compositionally biased stretch (acidic residues) spans 307–317; sequence GEDDDVEDGQE.

It belongs to the GET4 family. As to quaternary structure, component of the bag6/bat3 complex.

It localises to the cytoplasm. The protein localises to the cytosol. In terms of biological role, as part of a cytosolic protein quality control complex, the bag6/bat3 complex, maintains misfolded and hydrophobic patches-containing proteins in a soluble state and participates in their proper delivery to the endoplasmic reticulum or alternatively can promote their sorting to the proteasome where they undergo degradation. The bag6/bat3 complex is involved in the post-translational delivery of tail-anchored/type II transmembrane proteins to the endoplasmic reticulum membrane. Similarly, the bag6/bat3 complex also functions as a sorting platform for proteins of the secretory pathway that are mislocalized to the cytosol either delivering them to the proteasome for degradation or to the endoplasmic reticulum. The bag6/bat3 complex also plays a role in the endoplasmic reticulum-associated degradation (ERAD), a quality control mechanism that eliminates unwanted proteins of the endoplasmic reticulum through their retrotranslocation to the cytosol and their targeting to the proteasome. It maintains these retrotranslocated proteins in an unfolded yet soluble state condition in the cytosol to ensure their proper delivery to the proteasome. This Xenopus laevis (African clawed frog) protein is Golgi to ER traffic protein 4 homolog B (get4-b).